The primary structure comprises 119 residues: Ribonuclease P protein component (119 aa).

Belongs to the RnpA family. In terms of assembly, consists of a catalytic RNA component (M1 or rnpB) and a protein subunit.

It carries out the reaction Endonucleolytic cleavage of RNA, removing 5'-extranucleotides from tRNA precursor.. Its function is as follows. RNaseP catalyzes the removal of the 5'-leader sequence from pre-tRNA to produce the mature 5'-terminus. It can also cleave other RNA substrates such as 4.5S RNA. The protein component plays an auxiliary but essential role in vivo by binding to the 5'-leader sequence and broadening the substrate specificity of the ribozyme. The polypeptide is Ribonuclease P protein component (Cronobacter sakazakii (strain ATCC BAA-894) (Enterobacter sakazakii)).